The chain runs to 160 residues: Afimbrial adhesin AFA-III (160 aa).

The first 21 residues, 1 to 21 (MKKLAIMAAASMVFAVSSAHA), serve as a signal peptide directing secretion. Positions 22-75 (GFTPSGTTGTTKLTVTEECQVRVGDLTVAKTRGQLTDAAPIGPVTVQALGCNAR) are receptor-binding.

It belongs to the Dr-adhesin family.

Its subcellular location is the fimbrium. Hemagglutinins of uropathogenic E.coli mediate adherence to the upper urinary tract. These adhesins bind to the Dr blood group antigen and also agglutinate human erythrocytes in the presence of D-mannose (mannose-resistant hemagglutination (MRHA)). The chain is Afimbrial adhesin AFA-III (afaE3) from Escherichia coli.